The chain runs to 315 residues: Olfactory receptor 3A10 (315 aa).

At 1-28 (MEPGAWGNRTAVTDFILLGLTGNVRLQP) the chain is on the extracellular side. Asn8 is a glycosylation site (N-linked (GlcNAc...) asparagine). Residues 29 to 49 (ILFVVFFFAYIVTVGGNLSIL) form a helical membrane-spanning segment. Topologically, residues 50 to 68 (AAIFVEPKLHTPMYYFLGN) are cytoplasmic. Residues 69–89 (LSLLDIGCISVTVPPMLVCLL) traverse the membrane as a helical segment. At 90-97 (AHECRVPY) the chain is on the extracellular side. The chain crosses the membrane as a helical span at residues 98 to 118 (AACISQLFFFHLLAGVDCHLL). Cys100 and Cys192 form a disulfide bridge. The Cytoplasmic portion of the chain corresponds to 119–145 (TAMAYDRYLAICQPLTYSTRMSREVQG). A helical transmembrane segment spans residues 146 to 166 (TLVGICCTVSFINALTHTVAV). Topologically, residues 167–200 (SVLDFCGPNVVNHFYCDLPPLFQLSCSSIYLNGQ) are extracellular. A helical membrane pass occupies residues 201-221 (LLFVGATFMGVVPMILISVSY). Residues 222–239 (AHVAAAVLRIRSTEGRKK) lie on the Cytoplasmic side of the membrane. Residues 240–260 (AFSTCGSHLTVVCIFYGTGFF) traverse the membrane as a helical segment. Over 261–274 (SYMRLGSVSASDKD) the chain is Extracellular. Residues 275–295 (KGIGILNTILSPMLNPLIYSL) traverse the membrane as a helical segment. Residues 296 to 315 (RNPDVQGALKRVLTGKRYPV) lie on the Cytoplasmic side of the membrane.

Belongs to the G-protein coupled receptor 1 family.

Its subcellular location is the cell membrane. In terms of biological role, odorant receptor. This is Olfactory receptor 3A10 from Mus musculus (Mouse).